The primary structure comprises 329 residues: Biotin synthase (329 aa).

Residues 46–275 (YYGNKVKLNM…TKEIRISGGR (230 aa)) enclose the Radical SAM core domain. [4Fe-4S] cluster contacts are provided by Cys-64, Cys-68, and Cys-71. Cys-108, Cys-140, Cys-200, and Arg-270 together coordinate [2Fe-2S] cluster.

This sequence belongs to the radical SAM superfamily. Biotin synthase family. As to quaternary structure, homodimer. Requires [4Fe-4S] cluster as cofactor. [2Fe-2S] cluster serves as cofactor.

It carries out the reaction (4R,5S)-dethiobiotin + (sulfur carrier)-SH + 2 reduced [2Fe-2S]-[ferredoxin] + 2 S-adenosyl-L-methionine = (sulfur carrier)-H + biotin + 2 5'-deoxyadenosine + 2 L-methionine + 2 oxidized [2Fe-2S]-[ferredoxin]. It functions in the pathway cofactor biosynthesis; biotin biosynthesis; biotin from 7,8-diaminononanoate: step 2/2. Catalyzes the conversion of dethiobiotin (DTB) to biotin by the insertion of a sulfur atom into dethiobiotin via a radical-based mechanism. This Anoxybacillus flavithermus (strain DSM 21510 / WK1) protein is Biotin synthase.